A 320-amino-acid polypeptide reads, in one-letter code: N-acetylneuraminate lyase (320 aa).

Aceneuramate contacts are provided by Thr51 and Thr52. The active-site Proton donor is the Tyr143. Lys173 acts as the Schiff-base intermediate with substrate in catalysis. Positions 175, 199, 201, 202, and 218 each coordinate aceneuramate.

This sequence belongs to the DapA family. NanA subfamily. Homotetramer.

It is found in the cytoplasm. It carries out the reaction aceneuramate = aldehydo-N-acetyl-D-mannosamine + pyruvate. The protein operates within amino-sugar metabolism; N-acetylneuraminate degradation. Its function is as follows. Catalyzes the cleavage of N-acetylneuraminic acid (sialic acid) to form pyruvate and N-acetylmannosamine via a Schiff base intermediate. It prevents sialic acids from being recycled and returning to the cell surface. Involved in the N-glycolylneuraminic acid (Neu5Gc) degradation pathway. The chain is N-acetylneuraminate lyase from Pongo abelii (Sumatran orangutan).